Here is a 375-residue protein sequence, read N- to C-terminus: Probable trehalose-phosphate phosphatase 7 (375 aa).

This sequence belongs to the trehalose phosphatase family. The cofactor is a divalent metal cation.

It catalyses the reaction alpha,alpha-trehalose 6-phosphate + H2O = alpha,alpha-trehalose + phosphate. Its pathway is glycan biosynthesis; trehalose biosynthesis. In terms of biological role, removes the phosphate from trehalose 6-phosphate to produce free trehalose. Trehalose accumulation in plant may improve abiotic stress tolerance. In Oryza sativa subsp. japonica (Rice), this protein is Probable trehalose-phosphate phosphatase 7 (TPP7).